An 801-amino-acid polypeptide reads, in one-letter code: LPS-assembly protein LptD (801 aa).

Positions 1–23 (MARLFSLKPLVLALGFCFGTHCA) are cleaved as a signal peptide.

It belongs to the LptD family. As to quaternary structure, component of the lipopolysaccharide transport and assembly complex. Interacts with LptE and LptA.

It is found in the cell outer membrane. Its function is as follows. Together with LptE, is involved in the assembly of lipopolysaccharide (LPS) at the surface of the outer membrane. The sequence is that of LPS-assembly protein LptD from Neisseria gonorrhoeae (strain ATCC 700825 / FA 1090).